Here is a 322-residue protein sequence, read N- to C-terminus: p55-v-Fos-transforming protein (322 aa).

Residues 69-95 (APGGRGQSIGRRGKVEQLSPEEEEKRR) form a disordered region. The bZIP domain maps to 91-154 (EEKRRIRRER…EKLEFILAAH (64 aa)). The segment at 93–113 (KRRIRRERNKMAAAKCRNRRR) is basic motif. The leucine-zipper stretch occupies residues 119 to 147 (LQAETDQLEEEKSALQAEIANLLKEKEKL). A disordered region spans residues 298–322 (AAHRKGSSSNEPSSDSLSSPTLLAL). Low complexity predominate over residues 304-316 (SSSNEPSSDSLSS).

It belongs to the bZIP family. Fos subfamily.

Its subcellular location is the host nucleus. This chain is p55-v-Fos-transforming protein (V-FOS), found in Galliformes.